Reading from the N-terminus, the 263-residue chain is Transmembrane protein 176B (263 aa).

4 helical membrane passes run 61 to 81 (LGVT…CLYF), 89 to 109 (ASGC…GIVI), 125 to 145 (LLLA…KSLI), and 197 to 217 (LFLA…VVSV). The interval 242-263 (KKLLGGDSAPASPTKEKIPVTP) is disordered. Residues serine 249 and serine 253 each carry the phosphoserine modification.

It belongs to the TMEM176 family. As to expression, expressed in spleen by a variety of myeloid cells including macrophages and dendritic cells (at protein level). Ubiquitously expressed with higher expression in lymphoid tissues.

The protein localises to the nucleus membrane. In terms of biological role, required for the development of cerebellar granule cells. May play a role in the process of maturation of dendritic cells. This Rattus norvegicus (Rat) protein is Transmembrane protein 176B (Tmem176b).